A 367-amino-acid polypeptide reads, in one-letter code: Glutamate 5-kinase (367 aa).

Lys-8 provides a ligand contact to ATP. Positions 49, 136, and 148 each coordinate substrate. ATP is bound by residues 168 to 169 and 210 to 216; these read TD and TGGMATK. A PUA domain is found at 275–353; sequence TGKLLLDAGA…DQIVQILGYE (79 aa).

The protein belongs to the glutamate 5-kinase family.

The protein localises to the cytoplasm. It carries out the reaction L-glutamate + ATP = L-glutamyl 5-phosphate + ADP. The protein operates within amino-acid biosynthesis; L-proline biosynthesis; L-glutamate 5-semialdehyde from L-glutamate: step 1/2. Functionally, catalyzes the transfer of a phosphate group to glutamate to form L-glutamate 5-phosphate. This chain is Glutamate 5-kinase, found in Synechococcus elongatus (strain ATCC 33912 / PCC 7942 / FACHB-805) (Anacystis nidulans R2).